A 587-amino-acid chain; its full sequence is Sorting nexin 2A (587 aa).

Disordered regions lie at residues 1–78 and 115–151; these read MMGS…DSDP and SPFD…SSSD. 2 stretches are compositionally biased toward polar residues: residues 42 to 59 and 123 to 134; these read NGDT…TLSN and SEINGTEDNSLH. Low complexity predominate over residues 135–150; that stretch reads SQFSDSLSRSPSSSSS. Residue serine 144 is modified to Phosphoserine. The PX domain maps to 157 to 277; it reads VSNPQKEQEI…KVFLQVQGKL (121 aa). Positions 201, 227, and 244 each coordinate a 1,2-diacyl-sn-glycero-3-phospho-(1D-myo-inositol-3-phosphate). The BAR domain maps to 331-586; the sequence is LRQSVSNDWG…TSQYDREKQS (256 aa).

The protein belongs to the sorting nexin family. Homodimer. Heterodimer with SNX1 or SNX2A. Component of the retromer complex which consists of VPS29 (MAG1), VPS26 (VPS26A or VPS26B), VPS35 (VPS35A or VPS35B or VPS35C), VPS5/17 (SNX1 or SNX2A or SNX2B). In terms of tissue distribution, ubiquitously expressed but at a lower level in flowers, siliques, and senescing leaves.

Its subcellular location is the cytoplasm. It is found in the endosome membrane. The protein localises to the prevacuolar compartment membrane. The protein resides in the golgi apparatus. It localises to the trans-Golgi network membrane. In terms of biological role, plays a role in vesicular protein sorting. Acts at the crossroads between the secretory and endocytic pathways. Is involved in the endosome to vacuole protein transport and, as component of the membrane-associated retromer complex, is also involved in endosome-to-Golgi retrograde transport. Also involved in the efficient sorting of seed storage protein globulin 12S. This is Sorting nexin 2A (SNX2A) from Arabidopsis thaliana (Mouse-ear cress).